We begin with the raw amino-acid sequence, 788 residues long: Ciliated left-right organizer metallopeptidase (788 aa).

An N-terminal signal peptide occupies residues 1–20 (MLLLLLLLLLLPPLVLRVAA). Residues 21–735 (SRCLHDETQK…DHNPSMTHLR (715 aa)) lie on the Extracellular side of the membrane. Positions 40-56 (SQLPSKSRSSSLTLPSS) are enriched in low complexity. Residues 40–59 (SQLPSKSRSSSLTLPSSRDP) are disordered. His305 is a binding site for Zn(2+). Glu306 is an active-site residue. Zn(2+) is bound at residue His309. Asn333 carries an N-linked (GlcNAc...) asparagine glycan. His385 is a Zn(2+) binding site. 4 N-linked (GlcNAc...) asparagine glycosylation sites follow: Asn425, Asn491, Asn524, and Asn713. Residues 736–756 (LSMGLCLMLLILVGVMGTTAY) traverse the membrane as a helical segment. Over 757 to 788 (QKRATLPVRPSASYHSPELHSTRVPVRGIREV) the chain is Cytoplasmic. A disordered region spans residues 767 to 788 (SASYHSPELHSTRVPVRGIREV).

This sequence belongs to the peptidase M8 family. Zn(2+) serves as cofactor.

The protein resides in the membrane. Functionally, putative metalloproteinase that plays a role in left-right patterning process. The polypeptide is Ciliated left-right organizer metallopeptidase (Homo sapiens (Human)).